Consider the following 127-residue polypeptide: Large ribosomal subunit protein bL12 (127 aa).

This sequence belongs to the bacterial ribosomal protein bL12 family. Homodimer. Part of the ribosomal stalk of the 50S ribosomal subunit. Forms a multimeric L10(L12)X complex, where L10 forms an elongated spine to which 2 to 4 L12 dimers bind in a sequential fashion. Binds GTP-bound translation factors.

Functionally, forms part of the ribosomal stalk which helps the ribosome interact with GTP-bound translation factors. Is thus essential for accurate translation. The chain is Large ribosomal subunit protein bL12 from Streptomyces virginiae (Streptomyces cinnamonensis).